Reading from the N-terminus, the 154-residue chain is Ubiquitin-conjugating enzyme E2 L3 (154 aa).

Residues 2-149 (AASRRLMKEL…AEEFTKKYGE (148 aa)) enclose the UBC core domain. The Glycyl thioester intermediate role is filled by Cys86. The residue at position 131 (Lys131) is an N6-acetyllysine.

Belongs to the ubiquitin-conjugating enzyme family. Interacts with PRKN; involved in ubiquitination and degradation of misfolded proteins. Interacts with UBE3A. Interacts with CCNB1IP1, CBL, ZAP70, RNF19A, RNF19B and RNF144B. Interacts with ARIH1. Interacts with ARIH2 (via RING-type 1). Interacts with NCOA1; they functionally interact to regulate progesterone receptor transcriptional activity. Interacts with NDFIP1 (via N-terminus); the interaction mediates recruitment of UBE2L3 to ITCH and causes MAP3K7 ubiquitination. Post-translationally, ubiquitinated. The alteration of UBE2L3 protein levels during the S-phase of the cell cycle is due to ubiquitin-dependent proteasomal degradation. Autoubiquitinated in vitro.

The protein resides in the nucleus. It is found in the cytoplasm. The catalysed reaction is S-ubiquitinyl-[E1 ubiquitin-activating enzyme]-L-cysteine + [E2 ubiquitin-conjugating enzyme]-L-cysteine = [E1 ubiquitin-activating enzyme]-L-cysteine + S-ubiquitinyl-[E2 ubiquitin-conjugating enzyme]-L-cysteine.. It participates in protein modification; protein ubiquitination. Ubiquitin-conjugating enzyme E2 that specifically acts with HECT-type and RBR family E3 ubiquitin-protein ligases. Does not function with most RING-containing E3 ubiquitin-protein ligases because it lacks intrinsic E3-independent reactivity with lysine: in contrast, it has activity with the RBR family E3 enzymes, such as PRKN, RNF31 and ARIH1, that function like RING-HECT hybrids. Accepts ubiquitin from the E1 complex and catalyzes its covalent attachment to other proteins. Mediates ubiquitination by the CUL9-RBX1 complex. In vitro catalyzes 'Lys-11'-linked polyubiquitination. Involved in the selective degradation of short-lived and abnormal proteins. Down-regulated during the S-phase it is involved in progression through the cell cycle. Regulates nuclear hormone receptors transcriptional activity. May play a role in myelopoiesis. This chain is Ubiquitin-conjugating enzyme E2 L3 (UBE2L3), found in Bos taurus (Bovine).